A 209-amino-acid polypeptide reads, in one-letter code: Uracil phosphoribosyltransferase (209 aa).

5-phospho-alpha-D-ribose 1-diphosphate-binding positions include Arg79, Arg104, and 131–139 (DPMLATGNS). Residues Ile194 and 199-201 (GDA) each bind uracil. Residue Asp200 coordinates 5-phospho-alpha-D-ribose 1-diphosphate.

This sequence belongs to the UPRTase family. Requires Mg(2+) as cofactor.

It carries out the reaction UMP + diphosphate = 5-phospho-alpha-D-ribose 1-diphosphate + uracil. The protein operates within pyrimidine metabolism; UMP biosynthesis via salvage pathway; UMP from uracil: step 1/1. Its activity is regulated as follows. Allosterically activated by GTP. Functionally, catalyzes the conversion of uracil and 5-phospho-alpha-D-ribose 1-diphosphate (PRPP) to UMP and diphosphate. The protein is Uracil phosphoribosyltransferase of Polaromonas naphthalenivorans (strain CJ2).